We begin with the raw amino-acid sequence, 327 residues long: ATP-dependent 6-phosphofructokinase (327 aa).

ATP-binding positions include Gly12, 73 to 74, and 103 to 106; these read RL and GDGS. Mg(2+) is bound at residue Asp104. Substrate is bound at residue 126 to 128; it reads TID. Asp128 serves as the catalytic Proton acceptor. Position 155 (Arg155) interacts with ADP. Substrate-binding positions include Arg163 and 170 to 172; that span reads MGH. ADP-binding positions include 186 to 188 and 214 to 216; these read GAD and KRS. Residues Glu223, Arg245, and 251 to 254 each bind substrate; that span reads HTQR.

This sequence belongs to the phosphofructokinase type A (PFKA) family. ATP-dependent PFK group I subfamily. Prokaryotic clade 'B1' sub-subfamily. As to quaternary structure, homotetramer. Mg(2+) is required as a cofactor.

It localises to the cytoplasm. It catalyses the reaction beta-D-fructose 6-phosphate + ATP = beta-D-fructose 1,6-bisphosphate + ADP + H(+). It participates in carbohydrate degradation; glycolysis; D-glyceraldehyde 3-phosphate and glycerone phosphate from D-glucose: step 3/4. With respect to regulation, allosterically activated by ADP and other diphosphonucleosides, and allosterically inhibited by phosphoenolpyruvate. Its function is as follows. Catalyzes the phosphorylation of D-fructose 6-phosphate to fructose 1,6-bisphosphate by ATP, the first committing step of glycolysis. The protein is ATP-dependent 6-phosphofructokinase of Spiroplasma citri.